The primary structure comprises 882 residues: Protein O-mannosyl-transferase TMTC1 (882 aa).

At 1 to 20 (MVVTTSARGGGGDRTPSRRR) the chain is on the cytoplasmic side. Positions 1–20 (MVVTTSARGGGGDRTPSRRR) are disordered. Residues 21–41 (GCGLAPAGAAALLAGASCLCY) form a helical membrane-spanning segment. Over 42–110 (GRSLQGEFVH…KLNIFLTGMN (69 aa)) the chain is Extracellular. Asn86 carries N-linked (GlcNAc...) asparagine glycosylation. The helical transmembrane segment at 111 to 131 (PFYFHAVNIILHCLVTLVLMY) threads the bilayer. The Cytoplasmic segment spans residues 132-137 (TCDKTV). The helical transmembrane segment at 138–157 (FKNRGLAFVTALLFAVHPIH) threads the bilayer. The Extracellular segment spans residues 158-160 (TEA). Residues 161–181 (VAGIVGRADVLACLLFLLAFL) traverse the membrane as a helical segment. At 182–197 (SYNRSLDQGCVGGSFP) the chain is on the cytoplasmic side. A helical membrane pass occupies residues 198–218 (STVSPFFLLLSLFLGTCAMLV). The Extracellular portion of the chain corresponds to 219 to 221 (KET). A helical transmembrane segment spans residues 222–238 (GITVFGVCLVYDLFSLS). The Cytoplasmic portion of the chain corresponds to 239 to 313 (NKQDKSSNGA…SPRAVWSMMR (75 aa)). Residues 246 to 277 (NGALCPRSPQQPGSPQPSSLPGHPHRENGKQQ) are disordered. Positions 251-267 (PRSPQQPGSPQPSSLPG) are enriched in low complexity. A helical transmembrane segment spans residues 314 to 334 (FLTYSYLLAFNVWLLLAPVTL). The Extracellular segment spans residues 335-354 (CYDWQVGSIPLVETIWDMRN). A helical membrane pass occupies residues 355 to 375 (LATIFLAVVMALLSLHCLAAF). The Cytoplasmic portion of the chain corresponds to 376-381 (KRLEHK). Residues 382 to 402 (EVLVGLLFLVFPFIPASNLFF) traverse the membrane as a helical segment. A topological domain (extracellular) is located at residue Arg403. Residues 404 to 424 (VGFVVAERVLYMPSMGYCILF) form a helical membrane-spanning segment. Residues 425–438 (VHGLSKLCTWLNRC) lie on the Cytoplasmic side of the membrane. Residues 439–459 (GATTLIVSTVLLLLLFSWKTV) traverse the membrane as a helical segment. The Extracellular portion of the chain corresponds to 460–882 (KQNEIWLSRE…LQEVREKDQT (423 aa)). 10 TPR repeats span residues 483–516 (AKVHYNYANFLKDQGRNKEAIYHYRTALKLYPRH), 517–547 (ASALNNLGTLTRDTAEAKMYYQRALQLHPQH), 548–581 (NRALFNLGNLLKSQEKKEEAITLLKDSIKYGPEF), 582–615 (ADAYSSLASLLAEQERFKEAEEIYQTGIKNCPDS), 616–649 (SDLHNNYGVFLVDTGLPEKAVAHYQQAIKLSPSH), 650–682 (HVAMVNLGRLYRSLGENSMAEEWYKRALQVAHK), 683–716 (AEILSPLGALYYNTGRYEEALQIYQEAAALQPSQ), 751–784 (LECYRLLSAIYSKQENHDKALDAIDKALQLKPKD), 789–822 (SELFFTKGNQLREQNLLDKAFESYRVAVQLNPDQ), and 823–856 (AQAWMNMGGIQHIKGKYVSARAYYERALQLVPDS).

Belongs to the TMTC family. In terms of assembly, may interact with FAM168B.

It is found in the membrane. It localises to the endoplasmic reticulum. It carries out the reaction a di-trans,poly-cis-dolichyl beta-D-mannosyl phosphate + L-seryl-[protein] = 3-O-(alpha-D-mannosyl)-L-seryl-[protein] + a di-trans,poly-cis-dolichyl phosphate + H(+). The catalysed reaction is a di-trans,poly-cis-dolichyl beta-D-mannosyl phosphate + L-threonyl-[protein] = 3-O-(alpha-D-mannosyl)-L-threonyl-[protein] + a di-trans,poly-cis-dolichyl phosphate + H(+). It participates in protein modification; protein glycosylation. Functionally, transfers mannosyl residues to the hydroxyl group of serine or threonine residues. The 4 members of the TMTC family are O-mannosyl-transferases dedicated primarily to the cadherin superfamily, each member seems to have a distinct role in decorating the cadherin domains with O-linked mannose glycans at specific regions. Also acts as O-mannosyl-transferase on other proteins such as PDIA3. This chain is Protein O-mannosyl-transferase TMTC1, found in Homo sapiens (Human).